Here is a 605-residue protein sequence, read N- to C-terminus: DNA primase (605 aa).

Residues 38 to 62 (CPFHDEKTPSFTVSEDKQICHCFGC) form a CHC2-type zinc finger. The 82-residue stretch at 260-341 (DEIVLLEGFM…NVFVIQLPSG (82 aa)) folds into the Toprim domain. Glu266, Asp310, and Asp312 together coordinate Mg(2+).

The protein belongs to the DnaG primase family. In terms of assembly, monomer. Interacts with DnaB. Zn(2+) is required as a cofactor. Mg(2+) serves as cofactor.

It carries out the reaction ssDNA + n NTP = ssDNA/pppN(pN)n-1 hybrid + (n-1) diphosphate.. Its function is as follows. RNA polymerase that catalyzes the synthesis of short RNA molecules used as primers for DNA polymerase during DNA replication. The polypeptide is DNA primase (Staphylococcus aureus (strain MSSA476)).